We begin with the raw amino-acid sequence, 142 residues long: Large ribosomal subunit protein uL11 (142 aa).

Belongs to the universal ribosomal protein uL11 family. As to quaternary structure, part of the ribosomal stalk of the 50S ribosomal subunit. Interacts with L10 and the large rRNA to form the base of the stalk. L10 forms an elongated spine to which L12 dimers bind in a sequential fashion forming a multimeric L10(L12)X complex. One or more lysine residues are methylated.

Its function is as follows. Forms part of the ribosomal stalk which helps the ribosome interact with GTP-bound translation factors. The polypeptide is Large ribosomal subunit protein uL11 (Thermobifida fusca (strain YX)).